The primary structure comprises 242 residues: LexA repressor (242 aa).

The segment at residues 26–46 (FEEMKAALNLKSKSGIHRLIS) is a DNA-binding region (H-T-H motif). Active-site for autocatalytic cleavage activity residues include S163 and K201.

The protein belongs to the peptidase S24 family. Homodimer.

The enzyme catalyses Hydrolysis of Ala-|-Gly bond in repressor LexA.. Represses a number of genes involved in the response to DNA damage (SOS response), including recA and lexA. In the presence of single-stranded DNA, RecA interacts with LexA causing an autocatalytic cleavage which disrupts the DNA-binding part of LexA, leading to derepression of the SOS regulon and eventually DNA repair. The protein is LexA repressor of Granulibacter bethesdensis (strain ATCC BAA-1260 / CGDNIH1).